Here is a 216-residue protein sequence, read N- to C-terminus: Adenylate kinase (216 aa).

Residue 10–15 participates in ATP binding; sequence GAGKGT. Residues 30–59 are NMP; sequence STGDMFRAAMKNETALGLEAKSYIDKGELV. Residues Thr31, Arg36, 57–59, 85–88, and Gln92 each bind AMP; these read ELV and GFPR. The interval 126-164 is LID; sequence GRFICRTCGATYHKLFNPPKVEGTCDRCGGHEFYQREDD. ATP is bound at residue Arg127. 2 residues coordinate Zn(2+): Cys130 and Cys133. 136–137 contacts ATP; sequence TY. Residues Cys150 and Cys153 each coordinate Zn(2+). 2 residues coordinate AMP: Arg161 and Arg172. Arg200 provides a ligand contact to ATP.

The protein belongs to the adenylate kinase family. As to quaternary structure, monomer.

The protein localises to the cytoplasm. The enzyme catalyses AMP + ATP = 2 ADP. It participates in purine metabolism; AMP biosynthesis via salvage pathway; AMP from ADP: step 1/1. Its function is as follows. Catalyzes the reversible transfer of the terminal phosphate group between ATP and AMP. Plays an important role in cellular energy homeostasis and in adenine nucleotide metabolism. The sequence is that of Adenylate kinase from Enterococcus faecalis (strain ATCC 700802 / V583).